The chain runs to 329 residues: Beta-ketoacyl-[acyl-carrier-protein] synthase III (329 aa).

Active-site residues include cysteine 123 and histidine 256. The tract at residues 257–261 is ACP-binding; the sequence is QANVR. The active site involves asparagine 286.

This sequence belongs to the thiolase-like superfamily. FabH family. In terms of assembly, homodimer.

The protein localises to the cytoplasm. It catalyses the reaction malonyl-[ACP] + acetyl-CoA + H(+) = 3-oxobutanoyl-[ACP] + CO2 + CoA. It participates in lipid metabolism; fatty acid biosynthesis. Catalyzes the condensation reaction of fatty acid synthesis by the addition to an acyl acceptor of two carbons from malonyl-ACP. Catalyzes the first condensation reaction which initiates fatty acid synthesis and may therefore play a role in governing the total rate of fatty acid production. Possesses both acetoacetyl-ACP synthase and acetyl transacylase activities. Its substrate specificity determines the biosynthesis of branched-chain and/or straight-chain of fatty acids. In Bordetella parapertussis (strain 12822 / ATCC BAA-587 / NCTC 13253), this protein is Beta-ketoacyl-[acyl-carrier-protein] synthase III.